The sequence spans 190 residues: UPF0301 protein Pden_0436 (190 aa).

Belongs to the UPF0301 (AlgH) family.

The chain is UPF0301 protein Pden_0436 from Paracoccus denitrificans (strain Pd 1222).